The following is a 416-amino-acid chain: Adenylosuccinate synthetase (416 aa).

GTP is bound by residues 13–19 and 41–43; these read GDEGKGK and GHT. The active-site Proton acceptor is the Asp14. Asp14 and Gly41 together coordinate Mg(2+). IMP is bound by residues 14-17, 39-42, Thr126, Arg140, Gln220, Thr235, and Arg299; these read DEGK and NAGH. His42 acts as the Proton donor in catalysis. 295–301 contacts substrate; the sequence is VSTGRKR. GTP is bound by residues Arg301, 327-329, and 405-407; these read KLD and STS.

Belongs to the adenylosuccinate synthetase family. In terms of assembly, homodimer. The cofactor is Mg(2+).

It localises to the cytoplasm. The catalysed reaction is IMP + L-aspartate + GTP = N(6)-(1,2-dicarboxyethyl)-AMP + GDP + phosphate + 2 H(+). It participates in purine metabolism; AMP biosynthesis via de novo pathway; AMP from IMP: step 1/2. In terms of biological role, plays an important role in the de novo pathway of purine nucleotide biosynthesis. Catalyzes the first committed step in the biosynthesis of AMP from IMP. The polypeptide is Adenylosuccinate synthetase (Campylobacter lari (strain RM2100 / D67 / ATCC BAA-1060)).